Here is a 126-residue protein sequence, read N- to C-terminus: Large ribosomal subunit protein bL12 (126 aa).

Belongs to the bacterial ribosomal protein bL12 family. In terms of assembly, homodimer. Part of the ribosomal stalk of the 50S ribosomal subunit. Forms a multimeric L10(L12)X complex, where L10 forms an elongated spine to which 2 to 4 L12 dimers bind in a sequential fashion. Binds GTP-bound translation factors.

Forms part of the ribosomal stalk which helps the ribosome interact with GTP-bound translation factors. Is thus essential for accurate translation. The chain is Large ribosomal subunit protein bL12 from Nocardia farcinica (strain IFM 10152).